The primary structure comprises 289 residues: Stress response regulator protein 1 (289 aa).

Positions 77–136 (LDCTNSEMDEEDDFEDDEDDENLGLINPLHHKSSHGQISDYSPLTPFTEPPSASLSKPSF) are disordered. The segment covering 83-98 (EMDEEDDFEDDEDDEN) has biased composition (acidic residues). Positions 127–136 (PSASLSKPSF) are enriched in polar residues. A Response regulatory domain is found at 163–281 (NFLIVDDNII…YDFVMDRIDE (119 aa)). Aspartate 214 carries the 4-aspartylphosphate modification.

Required for stress adaptation, morphogenesis and virulence. This chain is Stress response regulator protein 1 (SRR1), found in Scheffersomyces stipitis (strain ATCC 58785 / CBS 6054 / NBRC 10063 / NRRL Y-11545) (Yeast).